Here is a 180-residue protein sequence, read N- to C-terminus: Ribulose bisphosphate carboxylase small subunit, chloroplastic 5 (180 aa).

The transit peptide at 1 to 56 (MASSVMSSAAVATRGNGAQASMVAPFTGLKSTASFPVSRKQNLDITSIASNGGRVR) directs the protein to the chloroplast.

The protein belongs to the RuBisCO small chain family. In terms of assembly, heterohexadecamer of 8 large and 8 small subunits.

It is found in the plastid. The protein localises to the chloroplast. Its function is as follows. RuBisCO catalyzes two reactions: the carboxylation of D-ribulose 1,5-bisphosphate, the primary event in carbon dioxide fixation, as well as the oxidative fragmentation of the pentose substrate. Both reactions occur simultaneously and in competition at the same active site. Although the small subunit is not catalytic it is essential for maximal activity. The protein is Ribulose bisphosphate carboxylase small subunit, chloroplastic 5 of Solanum tuberosum (Potato).